The following is a 444-amino-acid chain: UDP-N-acetylmuramoylalanine--D-glutamate ligase (444 aa).

ATP is bound at residue 109–115 (GSNGKTT).

Belongs to the MurCDEF family.

The protein resides in the cytoplasm. The enzyme catalyses UDP-N-acetyl-alpha-D-muramoyl-L-alanine + D-glutamate + ATP = UDP-N-acetyl-alpha-D-muramoyl-L-alanyl-D-glutamate + ADP + phosphate + H(+). The protein operates within cell wall biogenesis; peptidoglycan biosynthesis. Cell wall formation. Catalyzes the addition of glutamate to the nucleotide precursor UDP-N-acetylmuramoyl-L-alanine (UMA). This chain is UDP-N-acetylmuramoylalanine--D-glutamate ligase, found in Bacteroides thetaiotaomicron (strain ATCC 29148 / DSM 2079 / JCM 5827 / CCUG 10774 / NCTC 10582 / VPI-5482 / E50).